A 266-amino-acid chain; its full sequence is Hemin import ATP-binding protein HmuV (266 aa).

Positions 12–248 (LEASHLHYHV…ETLTQWYQAD (237 aa)) constitute an ABC transporter domain. ATP is bound at residue 44 to 51 (GPNGAGKS).

The protein belongs to the ABC transporter superfamily. Heme (hemin) importer (TC 3.A.1.14.5) family. As to quaternary structure, the complex is composed of two ATP-binding proteins (HmuV), two transmembrane proteins (HmuU) and a solute-binding protein (HmuT).

The protein resides in the cell inner membrane. Its function is as follows. Part of the ABC transporter complex HmuTUV involved in hemin import. Responsible for energy coupling to the transport system. The polypeptide is Hemin import ATP-binding protein HmuV (Yersinia pestis bv. Antiqua (strain Antiqua)).